Consider the following 392-residue polypeptide: Meiotically up-regulated gene 11 protein (392 aa).

The protein resides in the cytoplasm. It is found in the nucleus. Has a role in meiosis. The chain is Meiotically up-regulated gene 11 protein (mug11) from Schizosaccharomyces pombe (strain 972 / ATCC 24843) (Fission yeast).